The following is a 133-amino-acid chain: Large ribosomal subunit protein bL19 (133 aa).

Residues 114–133 (IAERQMTAASKEEPAEKSEA) are disordered. Over residues 123–133 (SKEEPAEKSEA) the composition is skewed to basic and acidic residues.

This sequence belongs to the bacterial ribosomal protein bL19 family.

Its function is as follows. This protein is located at the 30S-50S ribosomal subunit interface and may play a role in the structure and function of the aminoacyl-tRNA binding site. This Phenylobacterium zucineum (strain HLK1) protein is Large ribosomal subunit protein bL19.